Consider the following 158-residue polypeptide: Protein Smg homolog (158 aa).

It belongs to the Smg family.

This Shewanella sp. (strain MR-4) protein is Protein Smg homolog.